The primary structure comprises 361 residues: Uroporphyrinogen decarboxylase (361 aa).

Residues 44–48 (RQAGR), D93, Y168, S223, and H337 contribute to the substrate site.

This sequence belongs to the uroporphyrinogen decarboxylase family. As to quaternary structure, homodimer.

The protein resides in the cytoplasm. It catalyses the reaction uroporphyrinogen III + 4 H(+) = coproporphyrinogen III + 4 CO2. It participates in porphyrin-containing compound metabolism; protoporphyrin-IX biosynthesis; coproporphyrinogen-III from 5-aminolevulinate: step 4/4. In terms of biological role, catalyzes the decarboxylation of four acetate groups of uroporphyrinogen-III to yield coproporphyrinogen-III. This chain is Uroporphyrinogen decarboxylase, found in Thermobifida fusca (strain YX).